The primary structure comprises 233 residues: MNKILLQCDNLCKRYQEGSVQTDVLLNVSFSVGEGEMMAIVGSSGSGKSTLLHLLGGLDTPTSGDVIFNGQPMSKLSSAAKAELRNQKLGFIYQFHHLLPDFTALENVAMPLLIGKKKPAEINSCALEMLKAVGLEHRANHRPSELSGGERQRVAIARALVNNPRLVLADEPTGNLDARNADSIFQLLGELNRLQGTAFLVVTHDLQLAKRMSRQLEMRDGRLTAELSLMGAE.

The region spanning 6-233 is the ABC transporter domain; it reads LQCDNLCKRY…TAELSLMGAE (228 aa). 42–49 contributes to the ATP binding site; that stretch reads GSSGSGKS.

The protein belongs to the ABC transporter superfamily. Lipoprotein translocase (TC 3.A.1.125) family. The complex is composed of two ATP-binding proteins (LolD) and two transmembrane proteins (LolC and LolE).

The protein localises to the cell inner membrane. Functionally, part of the ABC transporter complex LolCDE involved in the translocation of mature outer membrane-directed lipoproteins, from the inner membrane to the periplasmic chaperone, LolA. Responsible for the formation of the LolA-lipoprotein complex in an ATP-dependent manner. The polypeptide is Lipoprotein-releasing system ATP-binding protein LolD (Shigella flexneri).